Consider the following 934-residue polypeptide: Protein translocase subunit SecA (934 aa).

ATP-binding positions include Gln90, 108 to 112 (GEGKT), and Asp509. The segment at 535–565 (PEEDHTPPVPLQRSAPGGFSDAAAPSLPRSG) is disordered.

It belongs to the SecA family. Monomer and homodimer. Part of the essential Sec protein translocation apparatus which comprises SecA, SecYEG and auxiliary proteins SecDF. Other proteins may also be involved.

It is found in the cell inner membrane. The protein resides in the cellular thylakoid membrane. It localises to the cytoplasm. The enzyme catalyses ATP + H2O + cellular proteinSide 1 = ADP + phosphate + cellular proteinSide 2.. In terms of biological role, part of the Sec protein translocase complex. Interacts with the SecYEG preprotein conducting channel. Has a central role in coupling the hydrolysis of ATP to the transfer of proteins into and across the cell membrane, serving as an ATP-driven molecular motor driving the stepwise translocation of polypeptide chains across the membrane. Probably participates in protein translocation into and across both the cytoplasmic and thylakoid membranes in cyanobacterial cells. The polypeptide is Protein translocase subunit SecA (Synechococcus sp. (strain CC9605)).